The primary structure comprises 89 residues: Small ribosomal subunit protein uS15 (89 aa).

This sequence belongs to the universal ribosomal protein uS15 family. As to quaternary structure, part of the 30S ribosomal subunit. Forms a bridge to the 50S subunit in the 70S ribosome, contacting the 23S rRNA.

One of the primary rRNA binding proteins, it binds directly to 16S rRNA where it helps nucleate assembly of the platform of the 30S subunit by binding and bridging several RNA helices of the 16S rRNA. Functionally, forms an intersubunit bridge (bridge B4) with the 23S rRNA of the 50S subunit in the ribosome. This is Small ribosomal subunit protein uS15 from Listeria innocua serovar 6a (strain ATCC BAA-680 / CLIP 11262).